A 702-amino-acid polypeptide reads, in one-letter code: Polyribonucleotide nucleotidyltransferase (702 aa).

D485 and D491 together coordinate Mg(2+). The KH domain maps to 552–612 (PRTEIICIDP…EGVKKAISII (61 aa)). The S1 motif domain maps to 622 to 690 (GEIYLGKVTK…NQGRINLSRK (69 aa)).

Belongs to the polyribonucleotide nucleotidyltransferase family. The cofactor is Mg(2+).

The protein resides in the cytoplasm. The catalysed reaction is RNA(n+1) + phosphate = RNA(n) + a ribonucleoside 5'-diphosphate. Its function is as follows. Involved in mRNA degradation. Catalyzes the phosphorolysis of single-stranded polyribonucleotides processively in the 3'- to 5'-direction. In Clostridium botulinum (strain Loch Maree / Type A3), this protein is Polyribonucleotide nucleotidyltransferase.